The sequence spans 504 residues: Pyrichalasin C-7 hydroxylase (504 aa).

The N-terminal stretch at 1–17 (MLNSAACIVLAITAVLG) is a signal peptide. Residue C449 coordinates heme.

It belongs to the cytochrome P450 family. It depends on heme as a cofactor.

It participates in mycotoxin biosynthesis. Its function is as follows. Cytochrome P450 monooxygenase; part of the gene cluster that mediates the biosynthesis of the mycotoxin pyrichalasin H, a tyrosine-derived cytochalasan that inhibits the growth of rice seedlings, but also inhibits lymphocyte capping and actin polymerization and alters cell morphology. Pyrichalasin H is indicated as the responsible agent for the genus-specific pathogenicity of M.grisea toward crabgrass. The first step in the pathway is catalyzed by the O-methyltransferase pyiA which methylates free tyrosine to generate the precursor O-methyltyrosine. The hybrid PKS-NRPS pyiS, assisted by the enoyl reductase pyiC, are responsible for fusion of the O-methyltyrosine precursor and the polyketide backbone. The polyketide synthase module (PKS) of pyiS is responsible for the synthesis of the polyketide backbone and the downstream nonribosomal peptide synthetase (NRPS) amidates the carboxyl end of the polyketide with the O-methyltyrosine precursor. As the NRPS A-domain demonstrates substrate tolerance, pyiS can also use phenylalanine, tyrosine and even para-chlorophenylalanine as amino acid precursor, which leads to the production of novel cytochalasans, including halogenated cytochalasans. Because pyiS lacks a designated enoylreductase (ER) domain, the required activity is provided the enoyl reductase pyiC. Reduction by the hydrolyase pyiE leads to 1,5-dihydropyrrolone, which is substrate for dehydration and intra-molecular Diels-Alder cyclization by the Diels-Alderase pyiF to yield the required isoindolone-fused macrocycle. The tailoring cytochrome P450 monooxygenases piyD and piyG catalyze the hydroxylation at C-18 and C-7, respectivily, whereas the short-chain dehydrogenase/reductase pyiH reduces the carbonyl at C-21 in preparation for the transfer of an acetyl group by the acetyltransferase pyiB. These 3 reactions whose order is not clear yet, lead to the production of O-methylpyrichalasin J, a deacetylated pyrichalasin H. Finally, pyiB to converts O-methylpyrichalasin J into the final product pyrichalasin H via acetylation of C-21. This chain is Pyrichalasin C-7 hydroxylase, found in Pyricularia grisea (Crabgrass-specific blast fungus).